Here is a 292-residue protein sequence, read N- to C-terminus: NAD kinase (292 aa).

Asp-72 acts as the Proton acceptor in catalysis. Residues 72–73, 146–147, His-157, Arg-174, Asp-176, and 187–192 each bind NAD(+); these read DG, NE, and TAYALS.

Belongs to the NAD kinase family. A divalent metal cation is required as a cofactor.

It is found in the cytoplasm. It carries out the reaction NAD(+) + ATP = ADP + NADP(+) + H(+). Involved in the regulation of the intracellular balance of NAD and NADP, and is a key enzyme in the biosynthesis of NADP. Catalyzes specifically the phosphorylation on 2'-hydroxyl of the adenosine moiety of NAD to yield NADP. The polypeptide is NAD kinase (Shewanella oneidensis (strain ATCC 700550 / JCM 31522 / CIP 106686 / LMG 19005 / NCIMB 14063 / MR-1)).